We begin with the raw amino-acid sequence, 82 residues long: RNA-binding protein Hfq (82 aa).

The Sm domain maps to 11–72; the sequence is DTFLNAVRKS…ISTIAPSAPV (62 aa).

Belongs to the Hfq family. As to quaternary structure, homohexamer.

Its function is as follows. RNA chaperone that binds small regulatory RNA (sRNAs) and mRNAs to facilitate mRNA translational regulation in response to envelope stress, environmental stress and changes in metabolite concentrations. Also binds with high specificity to tRNAs. In Hyphomonas neptunium (strain ATCC 15444), this protein is RNA-binding protein Hfq.